The chain runs to 300 residues: GTPase Era (300 aa).

The 168-residue stretch at 6 to 173 (KSGFVAIVGR…MDVLVEQMPE (168 aa)) folds into the Era-type G domain. Residues 14 to 21 (GRPNVGKS) are G1. 14-21 (GRPNVGKS) is a GTP binding site. The G2 stretch occupies residues 40–44 (QTTRN). The segment at 61–64 (DTPG) is G3. GTP is bound by residues 61–65 (DTPGI) and 123–126 (NKID). Residues 123–126 (NKID) are G4. A G5 region spans residues 152 to 154 (ISA). The 78-residue stretch at 204 to 281 (TRDEIPHSVA…YLELWVKVQK (78 aa)) folds into the KH type-2 domain.

It belongs to the TRAFAC class TrmE-Era-EngA-EngB-Septin-like GTPase superfamily. Era GTPase family. As to quaternary structure, monomer.

The protein localises to the cytoplasm. The protein resides in the cell membrane. An essential GTPase that binds both GDP and GTP, with rapid nucleotide exchange. Plays a role in 16S rRNA processing and 30S ribosomal subunit biogenesis and possibly also in cell cycle regulation and energy metabolism. The sequence is that of GTPase Era from Enterococcus faecalis (strain ATCC 700802 / V583).